Consider the following 199-residue polypeptide: Phosphoheptose isomerase (199 aa).

In terms of domain architecture, SIS spans 36–198 (MAQCLLNEHK…DRKLIPSSED (163 aa)). Residue 51-53 (NGG) participates in substrate binding. Zn(2+)-binding residues include histidine 60 and glutamate 64. Substrate-binding positions include glutamate 64, 93–94 (ND), 119–121 (STS), serine 124, and glutamine 174. Positions 174 and 182 each coordinate Zn(2+).

It belongs to the SIS family. GmhA subfamily. As to quaternary structure, homotetramer. The cofactor is Zn(2+).

The protein localises to the cytoplasm. The enzyme catalyses 2 D-sedoheptulose 7-phosphate = D-glycero-alpha-D-manno-heptose 7-phosphate + D-glycero-beta-D-manno-heptose 7-phosphate. It participates in carbohydrate biosynthesis; D-glycero-D-manno-heptose 7-phosphate biosynthesis; D-glycero-alpha-D-manno-heptose 7-phosphate and D-glycero-beta-D-manno-heptose 7-phosphate from sedoheptulose 7-phosphate: step 1/1. Catalyzes the isomerization of sedoheptulose 7-phosphate in D-glycero-D-manno-heptose 7-phosphate. This chain is Phosphoheptose isomerase, found in Coxiella burnetii (strain CbuK_Q154) (Coxiella burnetii (strain Q154)).